Reading from the N-terminus, the 501-residue chain is Solute carrier family 2, facilitated glucose transporter member 5 (501 aa).

Position 1 is an N-acetylmethionine (Met1). Topologically, residues 1-18 (MEQQDQSMKEGRLTLVLA) are cytoplasmic. A helical transmembrane segment spans residues 19–39 (LATLIAAFGSSFQYGYNVAAV). Position 32 (Tyr32) interacts with D-fructose. The Extracellular segment spans residues 40 to 68 (NSPALLMQQFYNETYYGRTGEFMEDFPLT). Asn51 is a glycosylation site (N-linked (GlcNAc...) asparagine). Residues 69-91 (LLWSVTVSMFPFGGFIGSLLVGP) form a helical membrane-spanning segment. Over 92-98 (LVNKFGR) the chain is Cytoplasmic. A helical membrane pass occupies residues 99–119 (KGALLFNNIFSIVPAILMGCS). Residues 120–126 (RVAKSFE) are Extracellular-facing. The helical transmembrane segment at 127 to 149 (LIIISRLLVGICAGVSSNVVPMY) threads the bilayer. Topologically, residues 150-161 (LGELAPKNLRGA) are cytoplasmic. Residues 162–182 (LGVVPQLFITVGILVAQIFGL) form a helical membrane-spanning segment. Residue Gln167 participates in D-fructose binding. The Extracellular portion of the chain corresponds to 183–192 (RNLLANVDGW). The chain crosses the membrane as a helical span at residues 193–213 (PILLGLTGVPAALQLVLLPFF). Residues 214–277 (PESPRYLLIQ…LFRMRSLRWQ (64 aa)) are Cytoplasmic-facing. A helical membrane pass occupies residues 278 to 298 (LLSIIVLMGGQQLSGVNAIYY). D-fructose is bound by residues Gln288 and 296–298 (IYY). Residues 299 to 313 (YADQIYLSAGVPKEH) are Extracellular-facing. A helical transmembrane segment spans residues 314 to 334 (VQFVTAGTGAVNVVMTFCAVF). The Cytoplasmic segment spans residues 335-342 (VVELLGRR). The helical transmembrane segment at 343–363 (LLLLLGFSICLVACCVLTAAL) threads the bilayer. Residues 364 to 371 (ALQDTVSW) are Extracellular-facing. Residues 372–394 (MPYISIVCVISYVIGHALGPSPI) form a helical membrane-spanning segment. Residue His387 coordinates D-fructose. At 395-412 (PALLITEIFLQSSRPSAF) the chain is on the cytoplasmic side. Residues 413–433 (MVGGSVHWLSNFTVGLIFPFI) form a helical membrane-spanning segment. A D-fructose-binding site is contributed by 419–420 (HW). At 434–439 (QEGLGP) the chain is on the extracellular side. The chain crosses the membrane as a helical span at residues 440-460 (YSFIVFAVICLLTTIYIFLIV). Topologically, residues 461-501 (PETKAKTFIEINQIFTKMNKVSEVYPEKEELKELPPVTLEQ) are cytoplasmic.

The protein belongs to the major facilitator superfamily. Sugar transporter (TC 2.A.1.1) family. Glucose transporter subfamily.

It is found in the apical cell membrane. The protein localises to the cell membrane. Its subcellular location is the sarcolemma. It catalyses the reaction D-fructose(out) = D-fructose(in). Its function is as follows. Functions as a fructose transporter that has only low activity with other monosaccharides. Can mediate the uptake of deoxyglucose, but with low efficiency. Essential for fructose uptake in the small intestine. Plays a role in the regulation of salt uptake and blood pressure in response to dietary fructose. Required for the development of high blood pressure in response to high dietary fructose intake. The protein is Solute carrier family 2, facilitated glucose transporter member 5 of Pongo abelii (Sumatran orangutan).